Here is a 488-residue protein sequence, read N- to C-terminus: (Z)-2-((N-methylformamido)methylene)-5-hydroxybutyrolactone dehydrogenase (488 aa).

Residues 149–150 and 226–227 contribute to the NAD(+) site; these read WN and GG. E248 functions as the Proton acceptor in the catalytic mechanism. L249 serves as a coordination point for NAD(+). C282 functions as the Nucleophile in the catalytic mechanism. E380 is a binding site for NAD(+).

This sequence belongs to the aldehyde dehydrogenase family. Homodimer.

It catalyses the reaction (Z)-2-((N-methylformamido)methylene)-5-hydroxybutanolactone + NAD(+) + H2O = (E)-2-((N-methylformamido) methylene)succinate + NADH + 3 H(+). Involved in the degradation of the pyridine ring of trigonelline (TG; N-methylnicotinate) into succinate and methylamine as carbon and nitrogen sources, respectively. Catalyzes the NAD(+)-dependent oxidation of (Z)-2-((N-methylformamido)methylene)-5-hydroxybutyrolactone (MFMB) to yield (E)-2-((N-methylformamido)methylene)succinate (MFMS). The sequence is that of (Z)-2-((N-methylformamido)methylene)-5-hydroxybutyrolactone dehydrogenase from Acinetobacter baylyi (strain ATCC 33305 / BD413 / ADP1).